The primary structure comprises 574 residues: Amino-acid acetyltransferase, mitochondrial (574 aa).

The N-terminal 13 residues, 1 to 13, are a transit peptide targeting the mitochondrion; the sequence is MWRRIFAHGLKYD. Positions 392-560 constitute an N-acetyltransferase domain; sequence KGAKPSNNSP…KRLREFMRSV (169 aa).

The protein belongs to the acetyltransferase family. Interacts with the acetylglutamate kinase chain of AGR5,6.

It localises to the mitochondrion. It carries out the reaction L-glutamate + acetyl-CoA = N-acetyl-L-glutamate + CoA + H(+). It functions in the pathway amino-acid biosynthesis; L-arginine biosynthesis; N(2)-acetyl-L-ornithine from L-glutamate: step 1/4. With respect to regulation, feedback inhibition by L-arginine. In terms of biological role, N-acetylglutamate synthase involved in arginine biosynthesis. In Saccharomyces cerevisiae (strain YJM789) (Baker's yeast), this protein is Amino-acid acetyltransferase, mitochondrial (ARG2).